Reading from the N-terminus, the 804-residue chain is Phenylalanine--tRNA ligase beta subunit (804 aa).

A tRNA-binding domain is found at 38–148 (RAAFRAFTIA…ENAPVGTSFA (111 aa)). Residues 401 to 476 (HTARVIDFPV…RIHGINRIDP (76 aa)) form the B5 domain. Asp454, Asp460, Glu463, and Glu464 together coordinate Mg(2+). The region spanning 710-803 (SLFQSLKRDY…VAKQTGGVLR (94 aa)) is the FDX-ACB domain.

Belongs to the phenylalanyl-tRNA synthetase beta subunit family. Type 1 subfamily. Tetramer of two alpha and two beta subunits. Requires Mg(2+) as cofactor.

Its subcellular location is the cytoplasm. It carries out the reaction tRNA(Phe) + L-phenylalanine + ATP = L-phenylalanyl-tRNA(Phe) + AMP + diphosphate + H(+). This chain is Phenylalanine--tRNA ligase beta subunit, found in Brucella suis biovar 1 (strain 1330).